Consider the following 117-residue polypeptide: UPF0145 protein CV_4322 (117 aa).

Belongs to the UPF0145 family.

In Chromobacterium violaceum (strain ATCC 12472 / DSM 30191 / JCM 1249 / CCUG 213 / NBRC 12614 / NCIMB 9131 / NCTC 9757 / MK), this protein is UPF0145 protein CV_4322.